Reading from the N-terminus, the 346-residue chain is Sensor protein kinase GraS (346 aa).

Transmembrane regions (helical) follow at residues 15 to 35 (MNWI…SLID) and 43 to 63 (LFYI…LTYF). The Histidine kinase domain occupies 126–332 (EFVHDIKTPV…TVRLIFPLQN (207 aa)).

Interacts with GraX.

The protein resides in the cell membrane. It carries out the reaction ATP + protein L-histidine = ADP + protein N-phospho-L-histidine.. Its function is as follows. Member of the two-component regulatory system GraR/GraS involved in resistance against cationic antimicrobial peptides (CAMPs). Functions as a sensor protein kinase which phosphorylates GraR through the auxiliary protein GraX. In turn, GraR up-regulates many genes such as adhesins, exoproteins, transporters, toxins, and proteins involved in cell wall synthesis. Down-regulates the expression of many genes involved in RNA and amino acid synthesis or glycolysis. The protein is Sensor protein kinase GraS (graS) of Staphylococcus aureus (strain MSSA476).